Here is a 426-residue protein sequence, read N- to C-terminus: Methylamine dehydrogenase heavy chain (426 aa).

A signal peptide spans 1 to 31 (MASARESTPRYLTLIGATLACSALALGAAQA). Residues 32-64 (QTEPAEPEAPAETAAADAAGQTEGQRGAAEAAA) are disordered. An intrachain disulfide couples cysteine 221 to cysteine 236.

Belongs to the aromatic amine dehydrogenase heavy chain family. Tetramer of two light and two heavy chains.

The protein localises to the periplasm. It carries out the reaction 2 oxidized [amicyanin] + methylamine + H2O = 2 reduced [amicyanin] + formaldehyde + NH4(+) + 2 H(+). Functionally, methylamine dehydrogenase carries out the oxidation of methylamine. Electrons are passed from methylamine dehydrogenase to amicyanin. The sequence is that of Methylamine dehydrogenase heavy chain (mauB) from Paracoccus versutus (Thiobacillus versutus).